Here is a 654-residue protein sequence, read N- to C-terminus: Mitochondrial-processing peptidase subunit alpha-1 (654 aa).

The tract at residues 73 to 94 is disordered; the sequence is SSSSYKGNNNNNNKLSYTTSSN. The stretch at 381 to 446 forms a coiled coil; the sequence is HKNHLKSQLQ…EQLELQQVKE (66 aa).

It belongs to the peptidase M16 family. In terms of assembly, heterodimer of alpha and beta subunits, forming the mitochondrial processing protease (MPP) in which subunit alpha is involved in substrate recognition and binding and subunit beta is the catalytic subunit.

It is found in the mitochondrion matrix. Substrate recognition and binding subunit of the essential mitochondrial processing protease (MPP), which cleaves the mitochondrial sequence off newly imported precursors proteins. In Dictyostelium discoideum (Social amoeba), this protein is Mitochondrial-processing peptidase subunit alpha-1 (mppA1).